Reading from the N-terminus, the 454-residue chain is Gustatory and odorant receptor 21a (454 aa).

Residues 1-114 are Cytoplasmic-facing; sequence MTFLDRTMSF…LPRTGYSWGS (114 aa). A helical transmembrane segment spans residues 115 to 135; that stretch reads KQVMWAIFIYSCQTTIVVLVL. Residues 136–153 are Extracellular-facing; the sequence is RERVKKFVTSPDKRFDEA. A helical transmembrane segment spans residues 154 to 174; sequence IYNVIFISLLFTNFLLPVASW. At 175–206 the chain is on the cytoplasmic side; sequence RHGPQVAIFKNMWTNYQYKFFKTTGSPIVFPN. The chain crosses the membrane as a helical span at residues 207-227; that stretch reads LYPLTWSLCVFSWLLSIAINL. Residues 228–237 lie on the Extracellular side of the membrane; it reads SQYFLQPDFR. Residues 238–258 form a helical membrane-spanning segment; the sequence is LWYTFAYYPIIAMLNCFCSLW. At 259-312 the chain is on the cytoplasmic side; the sequence is YINCNAFGTASRALSDALQTTIRGEKPAQKLTEYRHLWVDLSHMMQQLGRAYSN. The helical transmembrane segment at 313 to 333 threads the bilayer; that stretch reads MYGMYCLVIFFTTIIATYGSI. Residues 334-345 lie on the Extracellular side of the membrane; it reads SEIIDHGATYKE. The helical transmembrane segment at 346 to 366 threads the bilayer; that stretch reads VGLFVIVFYCMGLLYIICNEA. The Cytoplasmic portion of the chain corresponds to 367–422; sequence HYASRKVGLDFQTKLLNINLTAVDAATQKEVEMLLVAINKNPPIMNLDGYANINRE. Residues 423-443 form a helical membrane-spanning segment; that stretch reads LITTNISFMATYLVVLLQFKI. Residues 444–454 are Extracellular-facing; sequence TEQRRIGQQQA.

The protein belongs to the insect chemoreceptor superfamily. Gustatory receptor (GR) family. Gr21a subfamily. As to quaternary structure, gr21a and Gr63a probably form a heterodimer that responds to CO(2). In terms of tissue distribution, expressed in the adult labellar chemosensory neurons. Carbon dioxide-responsive neurons coexpress Gr21a and Gr63a in a pair of chemosensory receptors at both larval and adult life stages. A single bilateral neuron, expressing the Gr21a receptor, is responsible for CO(2) detection in larvae.

Its subcellular location is the cell membrane. Functionally, gustatory and odorant receptor which mediates acceptance or avoidance behavior, depending on its substrates. Gr21a and Gr63a together are sufficient for carbon dioxide detection and avoidance behavior. It is possible that the CO(2) receptors Gr63a and Gr21a activate the TRPC channels through Galpha49B and Plc21C. This innate olfactory avoidance behavior can be inhibited by inhibitory interactions of the odors such as 1-hexanol and 2,3-butanedione with Gr21a and Gr63a. In Drosophila melanogaster (Fruit fly), this protein is Gustatory and odorant receptor 21a (Gr21a).